A 426-amino-acid chain; its full sequence is Histidine--tRNA ligase (426 aa).

It belongs to the class-II aminoacyl-tRNA synthetase family.

The protein localises to the cytoplasm. The catalysed reaction is tRNA(His) + L-histidine + ATP = L-histidyl-tRNA(His) + AMP + diphosphate + H(+). The polypeptide is Histidine--tRNA ligase (Sulfurisphaera tokodaii (strain DSM 16993 / JCM 10545 / NBRC 100140 / 7) (Sulfolobus tokodaii)).